The chain runs to 231 residues: Red fluorescent protein eqFP611 (231 aa).

Residues 63-65 constitute a cross-link (2-iminomethyl-5-imidazolinone (Met-Gly)); that stretch reads MYG. Residue Tyr-64 is modified to (E)-2,3-didehydrotyrosine.

This sequence belongs to the GFP family. Monomer. In terms of processing, contains a chromophore consisting of modified amino acid residues. The chromophore is formed by autocatalytic backbone condensation between Xaa-N and Gly-(N+2), oxidation of Tyr-(N+1) to didehydrotyrosine, and formation of a double bond to the alpha-amino nitrogen of residue Xaa-N. Maturation of the chromophore requires nothing other than molecular oxygen.

In terms of biological role, pigment protein. The protein is Red fluorescent protein eqFP611 of Entacmaea quadricolor (Bubble-tip anemone).